A 95-amino-acid polypeptide reads, in one-letter code: Small ribosomal subunit protein bS6 (95 aa).

This sequence belongs to the bacterial ribosomal protein bS6 family.

In terms of biological role, binds together with bS18 to 16S ribosomal RNA. This is Small ribosomal subunit protein bS6 from Clostridium beijerinckii (strain ATCC 51743 / NCIMB 8052) (Clostridium acetobutylicum).